Consider the following 67-residue polypeptide: Large ribosomal subunit protein bL32 (67 aa).

The segment covering 1–19 (MAVPKRKMSRSNTRSRRSQ) has biased composition (basic residues). The interval 1-22 (MAVPKRKMSRSNTRSRRSQWKA) is disordered.

Belongs to the bacterial ribosomal protein bL32 family.

This Kineococcus radiotolerans (strain ATCC BAA-149 / DSM 14245 / SRS30216) protein is Large ribosomal subunit protein bL32.